Consider the following 489-residue polypeptide: Mitogen-activated protein kinase adapter protein MST50 (489 aa).

The interval M1–S56 is disordered. Residues P37–Y54 show a composition bias toward polar residues. Positions W69–A132 constitute an SAM domain. Disordered stretches follow at residues P207–R285 and S309–A379. 2 stretches are compositionally biased toward polar residues: residues P256–Q265 and A328–A346. The Ras-associating domain maps to S377–N457.

As to quaternary structure, interacts with MST7 and MST11. Interacts with MCK1, MKK2 and HIK1.

Mitogen-activated protein kinase adapter protein; part of the MST11-MST7-PMK1 MAP kinase (MAPK) cascade that is essential for appressorium formation, penetration and invasive growth. Binds to the MAPKKK MST11 and the MAPKK MST7 to maintain the stability of the MST11-MST7 complex for the phosphorylation of the MAPK PMK1. Is also involved in the MPS1 and OSM1 MAPK pathways, and especially plays a role in the activation of MPS1 in response to cell wall stress. Its function differs in the 3 MAPK pathways. This Pyricularia oryzae (strain 70-15 / ATCC MYA-4617 / FGSC 8958) (Rice blast fungus) protein is Mitogen-activated protein kinase adapter protein MST50.